The following is a 566-amino-acid chain: Chaperone ric-8 (566 aa).

The protein belongs to the synembryn family. Interacts with GDP-bound G-alpha proteins goa-1 and gpa-16. Does not interact with G-alpha proteins when they are in complex with subunits beta and gamma. As to expression, present throughout the nervous system in juveniles and adults (at protein level).

It is found in the cytoplasm. Its subcellular location is the cell cortex. In terms of biological role, chaperone that specifically binds and folds some, but not all, nascent G alpha proteins prior to G protein heterotrimer formation, promoting their stability and activity. Also acts as a guanine nucleotide exchange factor (GEF) for G alpha proteins by stimulating exchange of bound GDP for free GTP. Able to facilitate synaptic transmission in the nervous system probably by activating G(q)-alpha (egl-30). Also able to activate the G(s)-alpha in synaptic signaling network. Plays a key role in asymmetric spindle positioning, a step for asymmetric cell division that generates cell diversity during development by activating G(i)-alpha protein goa-1 and gpa-16 independently of G-protein coupled receptors. While it acts as a GEF for goa-1, it has no GEF activity toward gpa-16. In addition to its GEF activity, it is required for cortical subcellular localization of G-alpha proteins such as gpa-16. Also required for the interaction of goa-1 and gpr-1/2, suggesting that it may act by generating G-alpha proteins free from G-beta-gamma subunits, enabling gpr-1/2 to mediate asymmetric cell division. The sequence is that of Chaperone ric-8 (ric-8) from Caenorhabditis elegans.